Reading from the N-terminus, the 340-residue chain is Phosphoribosylformylglycinamidine cyclo-ligase (340 aa).

Belongs to the AIR synthase family.

The protein localises to the cytoplasm. The enzyme catalyses 2-formamido-N(1)-(5-O-phospho-beta-D-ribosyl)acetamidine + ATP = 5-amino-1-(5-phospho-beta-D-ribosyl)imidazole + ADP + phosphate + H(+). It functions in the pathway purine metabolism; IMP biosynthesis via de novo pathway; 5-amino-1-(5-phospho-D-ribosyl)imidazole from N(2)-formyl-N(1)-(5-phospho-D-ribosyl)glycinamide: step 2/2. This Streptococcus mutans serotype c (strain ATCC 700610 / UA159) protein is Phosphoribosylformylglycinamidine cyclo-ligase.